Reading from the N-terminus, the 123-residue chain is Small ribosomal subunit protein uS12cz/uS12cy (123 aa).

It belongs to the universal ribosomal protein uS12 family. In terms of assembly, part of the 30S ribosomal subunit.

It localises to the plastid. Its subcellular location is the chloroplast. With S4 and S5 plays an important role in translational accuracy. Located at the interface of the 30S and 50S subunits. The polypeptide is Small ribosomal subunit protein uS12cz/uS12cy (rps12-A) (Nymphaea alba (White water-lily)).